The chain runs to 377 residues: Alanine racemase (377 aa).

The active-site Proton acceptor; specific for D-alanine is Lys-37. At Lys-37 the chain carries N6-(pyridoxal phosphate)lysine. Position 135 (Arg-135) interacts with substrate. Residue Tyr-271 is the Proton acceptor; specific for L-alanine of the active site. Met-319 is a binding site for substrate.

It belongs to the alanine racemase family. Requires pyridoxal 5'-phosphate as cofactor.

It carries out the reaction L-alanine = D-alanine. It participates in amino-acid biosynthesis; D-alanine biosynthesis; D-alanine from L-alanine: step 1/1. Catalyzes the interconversion of L-alanine and D-alanine. May also act on other amino acids. In Helicobacter pylori (strain J99 / ATCC 700824) (Campylobacter pylori J99), this protein is Alanine racemase (alr).